A 99-amino-acid chain; its full sequence is Large ribosomal subunit protein bL27 (99 aa).

A propeptide spanning residues 1-10 (MKLIFDIQLF) is cleaved from the precursor.

Belongs to the bacterial ribosomal protein bL27 family. In terms of processing, the N-terminus is cleaved by ribosomal processing cysteine protease Prp.

The polypeptide is Large ribosomal subunit protein bL27 (Caldicellulosiruptor bescii (strain ATCC BAA-1888 / DSM 6725 / KCTC 15123 / Z-1320) (Anaerocellum thermophilum)).